A 103-amino-acid polypeptide reads, in one-letter code: MEAYDQKIAEEEAKAKEEEGVPDEEGWVKVTRRGRRPVLPRTEAASLRVLERERRKRSQKELLNYAWQHRESKMEHLAQLRKKFEEDKQRIELLRAQRKFRPY.

Residues 1-19 (MEAYDQKIAEEEAKAKEEE) show a composition bias toward basic and acidic residues. Residues 1–25 (MEAYDQKIAEEEAKAKEEEGVPDEE) are disordered. The stretch at 71–100 (ESKMEHLAQLRKKFEEDKQRIELLRAQRKF) forms a coiled coil.

It belongs to the RRP7 family.

In Homo sapiens (Human), this protein is Putative ribosomal RNA-processing protein 7 homolog B.